A 426-amino-acid chain; its full sequence is Glutamate-1-semialdehyde 2,1-aminomutase (426 aa).

Residue Lys-265 is modified to N6-(pyridoxal phosphate)lysine.

The protein belongs to the class-III pyridoxal-phosphate-dependent aminotransferase family. HemL subfamily. In terms of assembly, homodimer. Pyridoxal 5'-phosphate is required as a cofactor.

The protein resides in the cytoplasm. The catalysed reaction is (S)-4-amino-5-oxopentanoate = 5-aminolevulinate. The protein operates within porphyrin-containing compound metabolism; protoporphyrin-IX biosynthesis; 5-aminolevulinate from L-glutamyl-tRNA(Glu): step 2/2. This is Glutamate-1-semialdehyde 2,1-aminomutase from Shigella flexneri serotype 5b (strain 8401).